A 984-amino-acid chain; its full sequence is E3 ubiquitin-protein ligase BRE1A (984 aa).

The segment at 1-34 (MSGAGNKRAAGEPGPSAPPEKKAGVEDSGTTVET) is disordered. Residues 43–90 (TEELDIRTLQTKNRKLAEMLDQRQAIEDELREHIEKLERRQATDDASL) adopt a coiled-coil conformation. Positions 128 to 150 (VVPEPEPDSDSNQERKDERERGE) are disordered. Positions 139 to 150 (NQERKDERERGE) are enriched in basic and acidic residues. Coiled-coil stretches lie at residues 236 to 378 (ADTL…VKET) and 429 to 907 (SLHK…TTKK). Positions 506 to 632 (SDLSKIRSRS…KHEDGRKKEA (127 aa)) are disordered. The span at 514 to 526 (RSGSALLQSQSST) shows a compositional bias: polar residues. 2 stretches are compositionally biased toward basic and acidic residues: residues 527–540 (EDTKEEPPEIKQEP) and 558–632 (SEVK…KKEA). Residues 931–970 (CPCCNMRKKDAVLTKCFHVFCFECVKTRYDTRQRKCPKCN) form an RING-type zinc finger.

The protein belongs to the BRE1 family. In terms of assembly, component of the RNF20/40 complex (also known as BRE1 complex).

The protein resides in the nucleus. The catalysed reaction is S-ubiquitinyl-[E2 ubiquitin-conjugating enzyme]-L-cysteine + [acceptor protein]-L-lysine = [E2 ubiquitin-conjugating enzyme]-L-cysteine + N(6)-ubiquitinyl-[acceptor protein]-L-lysine.. The protein operates within protein modification; protein ubiquitination. Component of the RNF20/40 E3 ubiquitin-protein ligase complex that mediates monoubiquitination of 'Lys-120' of histone H2B (H2BK120ub1). H2BK120ub1 gives a specific tag for epigenetic transcriptional activation and is also prerequisite for histone H3 'Lys-4' and 'Lys-79' methylation (H3K4me and H3K79me, respectively). This chain is E3 ubiquitin-protein ligase BRE1A (RNF20), found in Gallus gallus (Chicken).